The sequence spans 207 residues: ATP synthase subunit b 2 (207 aa).

Residues 53-72 (TYASQLLWLVITFSVFYLLM) traverse the membrane as a helical segment.

The protein belongs to the ATPase B chain family. In terms of assembly, F-type ATPases have 2 components, F(1) - the catalytic core - and F(0) - the membrane proton channel. F(1) has five subunits: alpha(3), beta(3), gamma(1), delta(1), epsilon(1). F(0) has three main subunits: a(1), b(2) and c(10-14). The alpha and beta chains form an alternating ring which encloses part of the gamma chain. F(1) is attached to F(0) by a central stalk formed by the gamma and epsilon chains, while a peripheral stalk is formed by the delta and b chains.

It localises to the cell inner membrane. Functionally, f(1)F(0) ATP synthase produces ATP from ADP in the presence of a proton or sodium gradient. F-type ATPases consist of two structural domains, F(1) containing the extramembraneous catalytic core and F(0) containing the membrane proton channel, linked together by a central stalk and a peripheral stalk. During catalysis, ATP synthesis in the catalytic domain of F(1) is coupled via a rotary mechanism of the central stalk subunits to proton translocation. Its function is as follows. Component of the F(0) channel, it forms part of the peripheral stalk, linking F(1) to F(0). The b'-subunit is a diverged and duplicated form of b found in plants and photosynthetic bacteria. This chain is ATP synthase subunit b 2 (atpF2), found in Rhizobium etli (strain CIAT 652).